The sequence spans 320 residues: Acetyl-coenzyme A carboxylase carboxyl transferase subunit alpha (320 aa).

A CoA carboxyltransferase C-terminal domain is found at 41 to 295; the sequence is RIEEKAGQAL…GEAIAQAFDE (255 aa).

Belongs to the AccA family. In terms of assembly, acetyl-CoA carboxylase is a heterohexamer composed of biotin carboxyl carrier protein (AccB), biotin carboxylase (AccC) and two subunits each of ACCase subunit alpha (AccA) and ACCase subunit beta (AccD).

It is found in the cytoplasm. It catalyses the reaction N(6)-carboxybiotinyl-L-lysyl-[protein] + acetyl-CoA = N(6)-biotinyl-L-lysyl-[protein] + malonyl-CoA. Its pathway is lipid metabolism; malonyl-CoA biosynthesis; malonyl-CoA from acetyl-CoA: step 1/1. Its function is as follows. Component of the acetyl coenzyme A carboxylase (ACC) complex. First, biotin carboxylase catalyzes the carboxylation of biotin on its carrier protein (BCCP) and then the CO(2) group is transferred by the carboxyltransferase to acetyl-CoA to form malonyl-CoA. This Bradyrhizobium sp. (strain BTAi1 / ATCC BAA-1182) protein is Acetyl-coenzyme A carboxylase carboxyl transferase subunit alpha.